Consider the following 614-residue polypeptide: Pheromone-processing carboxypeptidase KEX1 (614 aa).

Residues 1–17 (MKLSWSLFCGLASLALS) form the signal peptide. At 18–518 (QFDEAPPSQS…SDAMWKAYYQ (501 aa)) the chain is on the lumenal side. Asn42 carries an N-linked (GlcNAc...) asparagine glycan. Catalysis depends on residues Ser177 and Asp379. 2 N-linked (GlcNAc...) asparagine glycosylation sites follow: Asn426 and Asn434. His437 is a catalytic residue. The segment at 465–503 (SGNKPGRGSENPSDLDDQKSGDQKSDDDSSSDDDDDAEH) is disordered. Residues 480–491 (DDQKSGDQKSDD) are compositionally biased toward basic and acidic residues. Acidic residues predominate over residues 492 to 501 (DSSSDDDDDA). A helical transmembrane segment spans residues 519 to 539 (AGFTALIVVLIILGLAGFLFW). Residues 540–614 (RKNRGHIYQE…EELVIRRPEV (75 aa)) are Cytoplasmic-facing.

This sequence belongs to the peptidase S10 family.

It localises to the golgi apparatus. The protein localises to the trans-Golgi network membrane. It carries out the reaction Preferential release of a C-terminal arginine or lysine residue.. In terms of biological role, protease with a carboxypeptidase B-like function involved in the C-terminal processing of the lysine and arginine residues from protein precursors. Promotes cell fusion and is involved in the programmed cell death. This is Pheromone-processing carboxypeptidase KEX1 (KEX1) from Yarrowia lipolytica (strain CLIB 122 / E 150) (Yeast).